Here is a 691-residue protein sequence, read N- to C-terminus: Methionine--tRNA ligase (691 aa).

Residues 12–22 (PYANGSFHIGH) carry the 'HIGH' region motif. 4 residues coordinate Zn(2+): C143, C146, C156, and C159. Positions 341-345 (KMSKS) match the 'KMSKS' region motif. K344 lines the ATP pocket. The 107-residue stretch at 585–691 (DFVKVDLRIA…PGAQPGMRIH (107 aa)) folds into the tRNA-binding domain.

The protein belongs to the class-I aminoacyl-tRNA synthetase family. MetG type 1 subfamily. Homodimer. Zn(2+) is required as a cofactor.

The protein localises to the cytoplasm. It carries out the reaction tRNA(Met) + L-methionine + ATP = L-methionyl-tRNA(Met) + AMP + diphosphate. In terms of biological role, is required not only for elongation of protein synthesis but also for the initiation of all mRNA translation through initiator tRNA(fMet) aminoacylation. This is Methionine--tRNA ligase from Bordetella avium (strain 197N).